The sequence spans 225 residues: MNSIEFPLLDRTTQNSVISTTLNDLSNWSRLSSLWPLLYGTSCCFIEFASLIGSRFDFDRYGLVPRSSPRQADLILTAGTVTMKMAPSLVRLYEQMPEPKYVIAMGACTITGGMFSTDSYSTVRGVDKLIPVDVYLPGCPPKPEAVIDAITKLRKKISREIYEDRIRSQQGDRCFTTNHKFCLVRSTRTGNYNQGLLYQPPSTSEIPPETFFNYKGSLSSHELVN.

The [4Fe-4S] cluster site is built by Cys43, Cys44, Cys108, and Cys139.

The protein belongs to the complex I 20 kDa subunit family. As to quaternary structure, NDH is composed of at least 16 different subunits, 5 of which are encoded in the nucleus. The cofactor is [4Fe-4S] cluster.

It localises to the plastid. Its subcellular location is the chloroplast thylakoid membrane. The enzyme catalyses a plastoquinone + NADH + (n+1) H(+)(in) = a plastoquinol + NAD(+) + n H(+)(out). It catalyses the reaction a plastoquinone + NADPH + (n+1) H(+)(in) = a plastoquinol + NADP(+) + n H(+)(out). Its function is as follows. NDH shuttles electrons from NAD(P)H:plastoquinone, via FMN and iron-sulfur (Fe-S) centers, to quinones in the photosynthetic chain and possibly in a chloroplast respiratory chain. The immediate electron acceptor for the enzyme in this species is believed to be plastoquinone. Couples the redox reaction to proton translocation, and thus conserves the redox energy in a proton gradient. The protein is NAD(P)H-quinone oxidoreductase subunit K, chloroplastic of Gossypium barbadense (Sea Island cotton).